Here is a 245-residue protein sequence, read N- to C-terminus: Glucan endo-1,3-beta-glucosidase (245 aa).

An N-terminal signal peptide occupies residues 1–23; it reads MMKTLVVVLSLSLTILSFGGAHA. 8 disulfides stabilise this stretch: Cys32/Cys244, Cys80/Cys90, Cys95/Cys102, Cys150/Cys233, Cys155/Cys216, Cys163/Cys179, Cys183/Cys192, and Cys193/Cys203.

It belongs to the thaumatin family. Abundantly expressed in ripening fruit.

It is found in the secreted. It catalyses the reaction Hydrolysis of (1-&gt;3)-beta-D-glucosidic linkages in (1-&gt;3)-beta-D-glucans.. In Prunus avium (Cherry), this protein is Glucan endo-1,3-beta-glucosidase.